The chain runs to 526 residues: Cytochrome P450 monooxygenase 58 (526 aa).

The next 3 helical transmembrane spans lie at 13 to 33 (IASS…LLLI), 115 to 135 (FIMA…GYGK), and 306 to 326 (IGAG…AMTL). Residue Cys-451 coordinates heme.

Belongs to the cytochrome P450 family. Heme serves as cofactor.

It is found in the membrane. The protein operates within secondary metabolite biosynthesis. In terms of biological role, cytochrome P450 monooxygenase that is able to use delta(6)-protoilludene as a substrate to produce delta(6)-protoilludene-8-ol. This Postia placenta (strain ATCC 44394 / Madison 698-R) (Brown rot fungus) protein is Cytochrome P450 monooxygenase 58.